The following is a 231-amino-acid chain: 5'-methylthioadenosine/S-adenosylhomocysteine nucleosidase (231 aa).

The active-site Proton acceptor is the glutamate 13. Substrate contacts are provided by residues glycine 79, methionine 153, and 174-175; that span reads ME. Aspartate 198 acts as the Proton donor in catalysis.

It belongs to the PNP/UDP phosphorylase family. MtnN subfamily.

The enzyme catalyses S-adenosyl-L-homocysteine + H2O = S-(5-deoxy-D-ribos-5-yl)-L-homocysteine + adenine. It catalyses the reaction S-methyl-5'-thioadenosine + H2O = 5-(methylsulfanyl)-D-ribose + adenine. The catalysed reaction is 5'-deoxyadenosine + H2O = 5-deoxy-D-ribose + adenine. It participates in amino-acid biosynthesis; L-methionine biosynthesis via salvage pathway; S-methyl-5-thio-alpha-D-ribose 1-phosphate from S-methyl-5'-thioadenosine (hydrolase route): step 1/2. Catalyzes the irreversible cleavage of the glycosidic bond in both 5'-methylthioadenosine (MTA) and S-adenosylhomocysteine (SAH/AdoHcy) to adenine and the corresponding thioribose, 5'-methylthioribose and S-ribosylhomocysteine, respectively. Also cleaves 5'-deoxyadenosine, a toxic by-product of radical S-adenosylmethionine (SAM) enzymes, into 5-deoxyribose and adenine. The chain is 5'-methylthioadenosine/S-adenosylhomocysteine nucleosidase from Halalkalibacterium halodurans (strain ATCC BAA-125 / DSM 18197 / FERM 7344 / JCM 9153 / C-125) (Bacillus halodurans).